The chain runs to 174 residues: U1 small nuclear ribonucleoprotein C (174 aa).

A Matrin-type zinc finger spans residues 4–36 (YYCDYCDKYLTHDSPSVRKSHTVGKQHKLAVQL). Low complexity-rich tracts occupy residues 82 to 109 (QQQQQQQQQQGILPFQGMQPPPHQQQGM) and 122 to 140 (PHQFNNNNNPHQQHSFQPP). Residues 82 to 174 (QQQQQQQQQQ…QHNQPTIPGL (93 aa)) are disordered. Over residues 141-163 (HHQHHPHQQHQQHQQHQHQHQHQ) the composition is skewed to basic residues. Residues 164–174 (QQHNQPTIPGL) are compositionally biased toward low complexity.

Belongs to the U1 small nuclear ribonucleoprotein C family. Component of the U1 snRNP. The U1 snRNP is composed of the U1 snRNA and the 7 core Sm proteins SNRPB, SNRPD1, SNRPD2, SNRPD3, SNRPE, SNRPF and SNRPG that assemble in a heptameric protein ring on the Sm site of the small nuclear RNA to form the core snRNP, and at least 3 U1 snRNP-specific proteins SNRNP70/U1-70K, SNRPA/U1-A and SNRPC/U1-C. SNRPC/U1-C interacts with U1 snRNA and the 5' splice-site region of the pre-mRNA.

Its subcellular location is the nucleus. Component of the spliceosomal U1 snRNP, which is essential for recognition of the pre-mRNA 5' splice-site and the subsequent assembly of the spliceosome. SNRPC/U1-C is directly involved in initial 5' splice-site recognition for both constitutive and regulated alternative splicing. The interaction with the 5' splice-site seems to precede base-pairing between the pre-mRNA and the U1 snRNA. Stimulates commitment or early (E) complex formation by stabilizing the base pairing of the 5' end of the U1 snRNA and the 5' splice-site region. The protein is U1 small nuclear ribonucleoprotein C of Dictyostelium discoideum (Social amoeba).